We begin with the raw amino-acid sequence, 322 residues long: Pantothenate kinase (322 aa).

Position 100–107 (100–107 (GSVAVGKS)) interacts with ATP.

It belongs to the prokaryotic pantothenate kinase family.

The protein localises to the cytoplasm. It catalyses the reaction (R)-pantothenate + ATP = (R)-4'-phosphopantothenate + ADP + H(+). It functions in the pathway cofactor biosynthesis; coenzyme A biosynthesis; CoA from (R)-pantothenate: step 1/5. In Agrobacterium fabrum (strain C58 / ATCC 33970) (Agrobacterium tumefaciens (strain C58)), this protein is Pantothenate kinase.